We begin with the raw amino-acid sequence, 604 residues long: Tyrosine-protein kinase transforming protein erbB (604 aa).

A Protein kinase domain is found at 132–399; sequence FKKVKVLGSG…KMARDPPRYL (268 aa). ATP-binding positions include 138-146 and K165; that span reads LGSGAFGTI. D257 serves as the catalytic Proton acceptor.

It belongs to the protein kinase superfamily. Tyr protein kinase family. EGF receptor subfamily.

It catalyses the reaction L-tyrosyl-[protein] + ATP = O-phospho-L-tyrosyl-[protein] + ADP + H(+). Its function is as follows. The v-erbB oncogene transforms avian fibroblasts and erythroblasts in culture and induces sarcomas and erythroleukemias in chickens. It is a truncated and mutated version of the receptor for epidermal growth factor. In Galliformes, this protein is Tyrosine-protein kinase transforming protein erbB (V-ERBB).